We begin with the raw amino-acid sequence, 381 residues long: MNKPLRIGLIAGEASGDILGEGLIKALKIHYPDAVFEGIAGPKMIAQGCTALHPLEALSVMGFVEVLGKLGSILRIRKSIINHFIANPPDIFIGIDAPDFNLTVELKLKQHNIKTIHYVSPSVWAWKQWRIHKIAKATDLVLAFLPFEKAFYDRFDVPCRFIGHTLADQLPLEPEKQQARQSLGLQADAKLLAILPGSRKAEVEILGPIFLQSAALISRQYPDYKFIVPMVNGARKKQLLEQQQQYAPDLPLQIFDGQASAVLQSADAVLLASGTAALEAMLAKVPMVVAYKVNLLTYVIAKALVKVKYTSLPNLIADKEIVKELSQYNCTVENIVAALQPLLGQDNHQMINTFIRLHKLIRCDADRQAAQAVVDVLNNKK.

The protein belongs to the LpxB family.

It catalyses the reaction a lipid X + a UDP-2-N,3-O-bis[(3R)-3-hydroxyacyl]-alpha-D-glucosamine = a lipid A disaccharide + UDP + H(+). Its pathway is bacterial outer membrane biogenesis; LPS lipid A biosynthesis. Its function is as follows. Condensation of UDP-2,3-diacylglucosamine and 2,3-diacylglucosamine-1-phosphate to form lipid A disaccharide, a precursor of lipid A, a phosphorylated glycolipid that anchors the lipopolysaccharide to the outer membrane of the cell. The sequence is that of Lipid-A-disaccharide synthase from Psychromonas ingrahamii (strain DSM 17664 / CCUG 51855 / 37).